The sequence spans 616 residues: Dihydroxy-acid dehydratase (616 aa).

Aspartate 81 contributes to the Mg(2+) binding site. Cysteine 122 contacts [2Fe-2S] cluster. The Mg(2+) site is built by aspartate 123 and lysine 124. Residue lysine 124 is modified to N6-carboxylysine. A [2Fe-2S] cluster-binding site is contributed by cysteine 195. A Mg(2+)-binding site is contributed by glutamate 491. Serine 517 (proton acceptor) is an active-site residue.

The protein belongs to the IlvD/Edd family. In terms of assembly, homodimer. [2Fe-2S] cluster is required as a cofactor. Mg(2+) serves as cofactor.

It catalyses the reaction (2R)-2,3-dihydroxy-3-methylbutanoate = 3-methyl-2-oxobutanoate + H2O. It carries out the reaction (2R,3R)-2,3-dihydroxy-3-methylpentanoate = (S)-3-methyl-2-oxopentanoate + H2O. The protein operates within amino-acid biosynthesis; L-isoleucine biosynthesis; L-isoleucine from 2-oxobutanoate: step 3/4. Its pathway is amino-acid biosynthesis; L-valine biosynthesis; L-valine from pyruvate: step 3/4. Its function is as follows. Functions in the biosynthesis of branched-chain amino acids. Catalyzes the dehydration of (2R,3R)-2,3-dihydroxy-3-methylpentanoate (2,3-dihydroxy-3-methylvalerate) into 2-oxo-3-methylpentanoate (2-oxo-3-methylvalerate) and of (2R)-2,3-dihydroxy-3-methylbutanoate (2,3-dihydroxyisovalerate) into 2-oxo-3-methylbutanoate (2-oxoisovalerate), the penultimate precursor to L-isoleucine and L-valine, respectively. This is Dihydroxy-acid dehydratase from Shigella sonnei (strain Ss046).